A 471-amino-acid chain; its full sequence is Glutamate--tRNA ligase (471 aa).

The 'HIGH' region motif lies at 10–20; the sequence is PSPTGFLHIGG. The tract at residues 117–137 is disordered; the sequence is GRPPRYDGRWRDRPASERPTD. Residues 239 to 243 carry the 'KMSKS' region motif; sequence KLSKR. K242 is an ATP binding site.

The protein belongs to the class-I aminoacyl-tRNA synthetase family. Glutamate--tRNA ligase type 1 subfamily. As to quaternary structure, monomer.

The protein localises to the cytoplasm. The enzyme catalyses tRNA(Glu) + L-glutamate + ATP = L-glutamyl-tRNA(Glu) + AMP + diphosphate. Functionally, catalyzes the attachment of glutamate to tRNA(Glu) in a two-step reaction: glutamate is first activated by ATP to form Glu-AMP and then transferred to the acceptor end of tRNA(Glu). In Azorhizobium caulinodans (strain ATCC 43989 / DSM 5975 / JCM 20966 / LMG 6465 / NBRC 14845 / NCIMB 13405 / ORS 571), this protein is Glutamate--tRNA ligase.